The sequence spans 314 residues: Ribosomal RNA small subunit methyltransferase H (314 aa).

S-adenosyl-L-methionine-binding positions include 37–39, aspartate 57, phenylalanine 84, aspartate 105, and glutamine 112; that span reads GSH.

It belongs to the methyltransferase superfamily. RsmH family.

Its subcellular location is the cytoplasm. The catalysed reaction is cytidine(1402) in 16S rRNA + S-adenosyl-L-methionine = N(4)-methylcytidine(1402) in 16S rRNA + S-adenosyl-L-homocysteine + H(+). Specifically methylates the N4 position of cytidine in position 1402 (C1402) of 16S rRNA. The chain is Ribosomal RNA small subunit methyltransferase H from Fusobacterium nucleatum subsp. nucleatum (strain ATCC 25586 / DSM 15643 / BCRC 10681 / CIP 101130 / JCM 8532 / KCTC 2640 / LMG 13131 / VPI 4355).